The chain runs to 508 residues: Steroid 17-alpha-hydroxylase/17,20 lyase (508 aa).

Position 202 (Asn-202) interacts with substrate. Cys-442 contacts heme.

This sequence belongs to the cytochrome P450 family. It depends on heme as a cofactor. In terms of processing, phosphorylation is necessary for 17,20-lyase, but not for 17-alpha-hydroxylase activity.

It is found in the endoplasmic reticulum membrane. The protein resides in the microsome membrane. It catalyses the reaction a C21-steroid + reduced [NADPH--hemoprotein reductase] + O2 = a 17alpha-hydroxy-C21-steroid + oxidized [NADPH--hemoprotein reductase] + H2O + H(+). It carries out the reaction progesterone + reduced [NADPH--hemoprotein reductase] + O2 = 17alpha-hydroxyprogesterone + oxidized [NADPH--hemoprotein reductase] + H2O + H(+). The enzyme catalyses pregnenolone + reduced [NADPH--hemoprotein reductase] + O2 = 17alpha-hydroxypregnenolone + oxidized [NADPH--hemoprotein reductase] + H2O + H(+). The catalysed reaction is 17alpha-hydroxyprogesterone + reduced [NADPH--hemoprotein reductase] + O2 = androst-4-ene-3,17-dione + acetate + oxidized [NADPH--hemoprotein reductase] + H2O + 2 H(+). It catalyses the reaction 17alpha-hydroxyprogesterone + reduced [NADPH--hemoprotein reductase] + O2 = 16alpha,17alpha-dihydroxyprogesterone + oxidized [NADPH--hemoprotein reductase] + H2O + H(+). It carries out the reaction 16alpha,17alpha-dihydroxyprogesterone + reduced [NADPH--hemoprotein reductase] + O2 = 6beta,16alpha,17alpha-trihydroxyprogesterone + oxidized [NADPH--hemoprotein reductase] + H2O + H(+). The enzyme catalyses 17alpha-hydroxypregnenolone + reduced [NADPH--hemoprotein reductase] + O2 = 3beta-hydroxyandrost-5-en-17-one + acetate + oxidized [NADPH--hemoprotein reductase] + H2O + 2 H(+). The catalysed reaction is 16alpha,17alpha-dihydroxypregnenolone + reduced [NADPH--hemoprotein reductase] + O2 = 3beta,16alpha-dihydroxy-androst-5-en-17-one + acetate + oxidized [NADPH--hemoprotein reductase] + H2O + 2 H(+). It catalyses the reaction 3beta-hydroxyandrost-5-en-17-one + reduced [NADPH--hemoprotein reductase] + O2 = 3beta,16alpha-dihydroxy-androst-5-en-17-one + oxidized [NADPH--hemoprotein reductase] + H2O + H(+). It carries out the reaction androst-4-ene-3,17-dione + reduced [NADPH--hemoprotein reductase] + O2 = 16alpha-hydroxyandrost-4-ene-3,17-dione + oxidized [NADPH--hemoprotein reductase] + H2O + H(+). It participates in steroid hormone biosynthesis. Its pathway is steroid biosynthesis; glucocorticoid biosynthesis. Its activity is regulated as follows. Regulated predominantly by intracellular cAMP levels. The 17,20-lyase activity is stimulated by cytochrome b5, which acts as an allosteric effector increasing the Vmax of the lyase activity. Functionally, a cytochrome P450 monooxygenase involved in corticoid and androgen biosynthesis. Catalyzes 17-alpha hydroxylation of C21 steroids, which is common for both pathways. A second oxidative step, required only for androgen synthesis, involves an acyl-carbon cleavage. The 17-alpha hydroxy intermediates, as part of adrenal glucocorticoids biosynthesis pathway, are precursors of cortisol. Hydroxylates steroid hormones, pregnenolone and progesterone to form 17-alpha hydroxy metabolites, followed by the cleavage of the C17-C20 bond to form C19 steroids, dehydroepiandrosterone (DHEA) and androstenedione. Has 16-alpha hydroxylase activity. Catalyzes 16-alpha hydroxylation of 17-alpha hydroxy pregnenolone, followed by the cleavage of the C17-C20 bond to form 16-alpha-hydroxy DHEA. Also 16-alpha hydroxylates androgens, relevant for estriol synthesis. Mechanistically, uses molecular oxygen inserting one oxygen atom into a substrate, and reducing the second into a water molecule, with two electrons provided by NADPH via cytochrome P450 reductase (CPR; NADPH-ferrihemoprotein reductase). The protein is Steroid 17-alpha-hydroxylase/17,20 lyase of Homo sapiens (Human).